Reading from the N-terminus, the 428-residue chain is GTPase Obg (428 aa).

The Obg domain occupies 1 to 158 (MFVDQVKIYV…RYVTLELKLL (158 aa)). The 171-residue stretch at 159-329 (ADVGLVGFPS…LLFAIADLLE (171 aa)) folds into the OBG-type G domain. GTP-binding positions include 165–172 (GFPSVGKS), 190–194 (FTTIV), 212–215 (DLPG), 282–285 (NKMD), and 310–312 (SAV). Mg(2+)-binding residues include serine 172 and threonine 192. An OCT domain is found at 350–428 (KLEKEEAPFH…LLNYEFEFVD (79 aa)).

Belongs to the TRAFAC class OBG-HflX-like GTPase superfamily. OBG GTPase family. Monomer. The cofactor is Mg(2+).

It is found in the cytoplasm. In terms of biological role, an essential GTPase which binds GTP, GDP and possibly (p)ppGpp with moderate affinity, with high nucleotide exchange rates and a fairly low GTP hydrolysis rate. Plays a role in control of the cell cycle, stress response, ribosome biogenesis and in those bacteria that undergo differentiation, in morphogenesis control. The chain is GTPase Obg from Anoxybacillus flavithermus (strain DSM 21510 / WK1).